We begin with the raw amino-acid sequence, 74 residues long: uncharacterized protein (74 aa).

Positions 1–25 (MMMTDLPENIRKTAVALLRLGEATA) are cleaved as a signal peptide.

This is an uncharacterized protein from Archaeoglobus fulgidus (strain ATCC 49558 / DSM 4304 / JCM 9628 / NBRC 100126 / VC-16).